The primary structure comprises 272 residues: Glutamate 5-kinase (272 aa).

Lysine 14 serves as a coordination point for ATP. 3 residues coordinate substrate: serine 54, aspartate 141, and asparagine 157. Residues serine 177–aspartate 178 and threonine 219–lysine 225 contribute to the ATP site.

It belongs to the glutamate 5-kinase family.

The protein resides in the cytoplasm. The enzyme catalyses L-glutamate + ATP = L-glutamyl 5-phosphate + ADP. Its pathway is amino-acid biosynthesis; L-proline biosynthesis; L-glutamate 5-semialdehyde from L-glutamate: step 1/2. In terms of biological role, catalyzes the transfer of a phosphate group to glutamate to form L-glutamate 5-phosphate. This is Glutamate 5-kinase from Streptococcus pyogenes serotype M28 (strain MGAS6180).